The following is a 126-amino-acid chain: Small ribosomal subunit protein uS11 (126 aa).

Belongs to the universal ribosomal protein uS11 family. Part of the 30S ribosomal subunit. Interacts with proteins S7 and S18. Binds to IF-3.

Functionally, located on the platform of the 30S subunit, it bridges several disparate RNA helices of the 16S rRNA. Forms part of the Shine-Dalgarno cleft in the 70S ribosome. The sequence is that of Small ribosomal subunit protein uS11 from Orientia tsutsugamushi (strain Boryong) (Rickettsia tsutsugamushi).